The following is a 536-amino-acid chain: MEQFGVRNPAIELDSIGLGAAASVRYNLLESHLYEEAIRRREADLTAHGALRALTGQHTGRSPKDKFVVRNAVTEDQIWWDNNKPMSPEHFALLHKDMLAHVHGKDLFVQDLIGGADHDYALPTRVVTEFAWHSLFIRNLLIRPERSALESFAPKLTIIDLPSFRADPERHGCRTETVIACDLVNGIVLIGGTSYAGEMKKSVFTVLNYLLPERGVMPMHCSANVGPEGDAAIFFGLSGTGKTTLSADPTRTLIGDDEHGWGENGIFNFEGGCYAKTIRLSAEAEPEIYETTRRFGTVLENVVLDEHGVPDLDDGSLTENTRSAYPLDFIPNASESGMTGHPETIIMLTADAFGVMPPIARLTPEQAMYHFLSGYTAKVAGTEKGVVEPEATFSTCFGAPFMPRHPTEYGNLLKELIARHGAGCWLVNTGWTGGAYGTGRRMPIKATRALLAAALKGDLDKAEFRIDPNFGFAVPVAVEGVDSAILDPRSTWADGQAYDAQAAKLVQMFVSNFAKFEDHVDGNVRDAAPGLRAAAE.

Residues R61, Y195, and K201 each coordinate substrate. Residues K201, H220, and G236–T244 contribute to the ATP site. 2 residues coordinate Mn(2+): K201 and H220. D257 lines the Mn(2+) pocket. Residues E285, R322, and T447 each coordinate ATP. R322 is a binding site for substrate.

It belongs to the phosphoenolpyruvate carboxykinase (ATP) family. Mn(2+) serves as cofactor.

The protein localises to the cytoplasm. It catalyses the reaction oxaloacetate + ATP = phosphoenolpyruvate + ADP + CO2. The protein operates within carbohydrate biosynthesis; gluconeogenesis. Involved in the gluconeogenesis. Catalyzes the conversion of oxaloacetate (OAA) to phosphoenolpyruvate (PEP) through direct phosphoryl transfer between the nucleoside triphosphate and OAA. This is Phosphoenolpyruvate carboxykinase (ATP) from Rhizobium rhizogenes (strain K84 / ATCC BAA-868) (Agrobacterium radiobacter).